The chain runs to 316 residues: Transaldolase (316 aa).

The Schiff-base intermediate with substrate role is filled by lysine 125.

The protein belongs to the transaldolase family. Type 1 subfamily. Homodimer.

Its subcellular location is the cytoplasm. The catalysed reaction is D-sedoheptulose 7-phosphate + D-glyceraldehyde 3-phosphate = D-erythrose 4-phosphate + beta-D-fructose 6-phosphate. It functions in the pathway carbohydrate degradation; pentose phosphate pathway; D-glyceraldehyde 3-phosphate and beta-D-fructose 6-phosphate from D-ribose 5-phosphate and D-xylulose 5-phosphate (non-oxidative stage): step 2/3. Functionally, transaldolase is important for the balance of metabolites in the pentose-phosphate pathway. This chain is Transaldolase, found in Acidovorax sp. (strain JS42).